We begin with the raw amino-acid sequence, 157 residues long: Crossover junction endodeoxyribonuclease RuvC (157 aa).

Active-site residues include Asp7, Glu67, and Asp140. Mg(2+)-binding residues include Asp7, Glu67, and Asp140.

The protein belongs to the RuvC family. Homodimer which binds Holliday junction (HJ) DNA. The HJ becomes 2-fold symmetrical on binding to RuvC with unstacked arms; it has a different conformation from HJ DNA in complex with RuvA. In the full resolvosome a probable DNA-RuvA(4)-RuvB(12)-RuvC(2) complex forms which resolves the HJ. Requires Mg(2+) as cofactor.

Its subcellular location is the cytoplasm. The enzyme catalyses Endonucleolytic cleavage at a junction such as a reciprocal single-stranded crossover between two homologous DNA duplexes (Holliday junction).. Functionally, the RuvA-RuvB-RuvC complex processes Holliday junction (HJ) DNA during genetic recombination and DNA repair. Endonuclease that resolves HJ intermediates. Cleaves cruciform DNA by making single-stranded nicks across the HJ at symmetrical positions within the homologous arms, yielding a 5'-phosphate and a 3'-hydroxyl group; requires a central core of homology in the junction. The consensus cleavage sequence is 5'-(A/T)TT(C/G)-3'. Cleavage occurs on the 3'-side of the TT dinucleotide at the point of strand exchange. HJ branch migration catalyzed by RuvA-RuvB allows RuvC to scan DNA until it finds its consensus sequence, where it cleaves and resolves the cruciform DNA. The protein is Crossover junction endodeoxyribonuclease RuvC of Rickettsia massiliae (strain Mtu5).